The chain runs to 650 residues: DNA mismatch repair protein MutL (650 aa).

The disordered stretch occupies residues 374 to 420; that stretch reads SSLPDTQRSQRQPEKAASGQRSSVDAGLSQGSSAHRASQTGLGQSGN. The span at 392–420 shows a compositional bias: polar residues; it reads GQRSSVDAGLSQGSSAHRASQTGLGQSGN.

The protein belongs to the DNA mismatch repair MutL/HexB family.

In terms of biological role, this protein is involved in the repair of mismatches in DNA. It is required for dam-dependent methyl-directed DNA mismatch repair. May act as a 'molecular matchmaker', a protein that promotes the formation of a stable complex between two or more DNA-binding proteins in an ATP-dependent manner without itself being part of a final effector complex. The protein is DNA mismatch repair protein MutL of Shewanella amazonensis (strain ATCC BAA-1098 / SB2B).